The chain runs to 399 residues: Odorant receptor 42b (399 aa).

Residues 1-45 (MVFELIRPAPLTEQKRSRDGCIYLYRAMKFIGWLPPKQGVLRYVY) lie on the Cytoplasmic side of the membrane. Residues 46–66 (LTWTLMTFVWCTTYLPLGFLG) traverse the membrane as a helical segment. Residues 67-83 (SYMTQIKSFSPGEFLTS) are Extracellular-facing. A helical transmembrane segment spans residues 84–104 (LQVCINAYGSSVKVAITYSML). Residues 105–140 (WRLIKAKNILDQLDLRCTAMEEREKIHLVVARSNHA) are Cytoplasmic-facing. A helical membrane pass occupies residues 141–161 (FLIFTFVYCGYAGSTYLSSVL). At 162-178 (SGRPPWQLYNPFIDWHD) the chain is on the extracellular side. The helical transmembrane segment at 179–199 (GTLKLWVASTLEYMVMSGAVL) threads the bilayer. At 200 to 268 (QDQLSDSYPL…AIIKPVIQGT (69 aa)) the chain is on the cytoplasmic side. Residues 269 to 289 (IFTQFLLIGLVLGFTLINVFF) form a helical membrane-spanning segment. At 290 to 292 (FSD) the chain is on the extracellular side. Residues 293-313 (IWTGIASFMFVITILLQTFPF) form a helical membrane-spanning segment. At 314–356 (CYTCNLIMEDCESLTHAIFQSNWVDASRRYKTTLLYFLQNVQQ) the chain is on the cytoplasmic side. Residues 357-377 (PIVFIAGGIFQISMSSNISVA) form a helical membrane-spanning segment. Topologically, residues 378–399 (KFAFSVITITKQMNIADKFKTD) are extracellular.

The protein belongs to the insect chemoreceptor superfamily. Heteromeric odorant receptor channel (TC 1.A.69) family. Or2a subfamily. In terms of assembly, interacts with Orco. Complexes exist early in the endomembrane system in olfactory sensory neurons (OSNs), coupling these complexes to the conserved ciliary trafficking pathway. As to expression, expressed in olfactory sensory neurons in the antenna.

It is found in the cell membrane. In terms of biological role, odorant receptor which mediates acceptance or avoidance behavior, depending on its substrates. The odorant receptor repertoire encodes a large collection of odor stimuli that vary widely in identity, intensity, and duration. May form a complex with Orco to form odorant-sensing units, providing sensitive and prolonged odorant signaling and calcium permeability. Involved in the behavioral responses to ethyl acetate and pentyl acetate. The polypeptide is Odorant receptor 42b (Or42b) (Drosophila melanogaster (Fruit fly)).